Reading from the N-terminus, the 386-residue chain is N-acetylneuraminate epimerase (386 aa).

The signal sequence occupies residues 1–29 (MGMQMKNFKKMMTLMALCLSVAITTSGYA). 7 Kelch repeats span residues 51–95 (VIYV…VFLN), 97–149 (ELYV…VKLN), 151–186 (TMVL…KVIY), 187–232 (NYFN…VMEN), 235–284 (LMLI…LAGA), 306–355 (QNYT…SYGD), and 357–386 (VFLI…LLIK). The active-site Proton acceptor is the E241.

Belongs to the NanM family. In terms of assembly, homodimer.

The protein localises to the periplasm. It carries out the reaction N-acetyl-alpha-neuraminate = N-acetyl-beta-neuraminate. Its function is as follows. Converts alpha-N-acetylneuranimic acid (Neu5Ac) to the beta-anomer, accelerating the equilibrium between the alpha- and beta-anomers. Probably facilitates sialidase-negative bacteria to compete successfully for limited amounts of extracellular Neu5Ac, which is likely taken up in the beta-anomer. In addition, the rapid removal of sialic acid from solution might be advantageous to the bacterium to damp down host responses. The sequence is that of N-acetylneuraminate epimerase from Salmonella choleraesuis (strain SC-B67).